An 856-amino-acid polypeptide reads, in one-letter code: Glucans biosynthesis glucosyltransferase H (856 aa).

The next 6 helical transmembrane spans lie at 144-164 (ILLV…KGIM), 198-218 (ILIL…TALM), 517-537 (VFLT…FLVL), 574-594 (LFST…ILIW), 608-628 (TLSM…RMIF), and 684-704 (FLWW…VSVI).

Belongs to the glycosyltransferase 2 family. OpgH subfamily.

The protein localises to the cell inner membrane. It participates in glycan metabolism; osmoregulated periplasmic glucan (OPG) biosynthesis. In terms of biological role, involved in the biosynthesis of osmoregulated periplasmic glucans (OPGs). This is Glucans biosynthesis glucosyltransferase H from Pseudomonas fluorescens (strain ATCC BAA-477 / NRRL B-23932 / Pf-5).